The following is a 329-amino-acid chain: Signal recognition particle receptor FtsY (329 aa).

Residues 127 to 134 (GVNGVGKT), 209 to 213 (DTAGR), and 273 to 276 (TKLD) contribute to the GTP site.

Belongs to the GTP-binding SRP family. FtsY subfamily. Part of the signal recognition particle protein translocation system, which is composed of SRP and FtsY.

It is found in the cell membrane. The protein resides in the cytoplasm. It carries out the reaction GTP + H2O = GDP + phosphate + H(+). Functionally, involved in targeting and insertion of nascent membrane proteins into the cytoplasmic membrane. Acts as a receptor for the complex formed by the signal recognition particle (SRP) and the ribosome-nascent chain (RNC). In Bacillus subtilis (strain 168), this protein is Signal recognition particle receptor FtsY.